A 721-amino-acid polypeptide reads, in one-letter code: 1,4-alpha-glucan branching enzyme GlgB (721 aa).

Aspartate 400 acts as the Nucleophile in catalysis. Residue glutamate 453 is the Proton donor of the active site.

It belongs to the glycosyl hydrolase 13 family. GlgB subfamily. As to quaternary structure, monomer.

The catalysed reaction is Transfers a segment of a (1-&gt;4)-alpha-D-glucan chain to a primary hydroxy group in a similar glucan chain.. It functions in the pathway glycan biosynthesis; glycogen biosynthesis. Catalyzes the formation of the alpha-1,6-glucosidic linkages in glycogen by scission of a 1,4-alpha-linked oligosaccharide from growing alpha-1,4-glucan chains and the subsequent attachment of the oligosaccharide to the alpha-1,6 position. The sequence is that of 1,4-alpha-glucan branching enzyme GlgB from Chlamydia felis (strain Fe/C-56) (Chlamydophila felis).